The chain runs to 869 residues: MAGYTPMIQQYLKIKAEYQDAFLFFRLGDFYEMFFEDAKKASQELEITLTSRDGGSSERIPMCGVPYHSCSSYIEQLIKKGYKVAICEQVEDPKSAKGVVKREVVQLITPGTVMDGKGIHENENNFIASVSKFQHTYGLAFSDLTTGENLVTAIERLDDVVSEIYSVGAREIVVSRNLDEKDVAMLKERCGATISFEDEQADEVPGIVNGLGSKELVDTFMRLYVYLKRTQKRSLDHLQNVQAYELEEAMKIDLYSKRNLELTETIRSKNKKGSLLWLLDETKTAMGGRLLKQWIDRPLIRKGQIEERQEIVETLIAHLFEREDLRERLKEVYDLERLAGRVAYGNVNARDLIQLKESLKQVPAIKQLVGSLDHPKAKARAEKIDPCGDLLNLLEDALYENPPLSLKEGNLIKDGYHAKLDEYRDASKNGKDWIARLEQQEREYTGIRSLKVGFNKVFGYYIEVTKANIHLLEEGRYERKQTLTNAERYITPELKEKEALILEAENNICELEYELFSELRSKVKEYIPRLQQLAKMMSELDVLQCFATISENRHYVKPEFSDDVVQVIDGRHPVVEKVMDSQSYVPNSCEMGKGRQMLLITGPNMSGKSTYMRQMALISILAQIGCFVPAKKAVLPIFDQIFTRIGAADDLISGQSTFMVEMLEAKNAIVHATKNSLILFDEIGRGTSTYDGMALAQAIIEYVHEHIGAKTLFSTHYHELTSLEEKLDDLKNVHVRAEEYEGKVVFLHQIKEGAADKSYGIHVAQLAELPDGLISRAKTILKELESGAKEAAPSTAPNMVKEAAEEAAATVADQPAQLSFFETDKPIEKETKLSKKEQAVLAEFKAMDLLDMTPIQVMNELYRLQKKLK.

602–609 (GPNMSGKS) contacts ATP.

It belongs to the DNA mismatch repair MutS family.

Its function is as follows. This protein is involved in the repair of mismatches in DNA. It is possible that it carries out the mismatch recognition step. This protein has a weak ATPase activity. This is DNA mismatch repair protein MutS from Bacillus licheniformis (strain ATCC 14580 / DSM 13 / JCM 2505 / CCUG 7422 / NBRC 12200 / NCIMB 9375 / NCTC 10341 / NRRL NRS-1264 / Gibson 46).